The following is a 604-amino-acid chain: Lipoma-preferred partner homolog (604 aa).

Disordered stretches follow at residues 31–96 and 129–381; these read TPSI…LDDV and DLES…AFRP. Polar residues predominate over residues 32–41; sequence PSISVSTQQT. Low complexity-rich tracts occupy residues 42-53 and 143-161; these read PKKFAPVVAPKP and GSGTSSSAATTPSVSTPVT. Residues 207 to 226 are compositionally biased toward polar residues; sequence SYTTASTPSRPTFNVQVRTA. Low complexity predominate over residues 365 to 377; that stretch reads SGYPSSGPTSSTP. 3 LIM zinc-binding domains span residues 406-465, 466-526, and 527-595; these read GRCA…INTL, EQCS…KFAP, and RCSV…RIQA.

This sequence belongs to the zyxin/ajuba family.

It is found in the nucleus. It localises to the cytoplasm. The protein localises to the cell junction. Its function is as follows. May play a structural role at sites of cell adhesion in maintaining cell shape and motility. May be involved in signal transduction from cell adhesion sites to the nucleus. This is Lipoma-preferred partner homolog (LPP) from Gallus gallus (Chicken).